A 152-amino-acid chain; its full sequence is ALK and LTK ligand 1 (152 aa).

The N-terminal stretch at 1–23 (MRAEKRWHILLSMILLLITSSQC) is a signal peptide. 2 disulfides stabilise this stretch: Cys113/Cys149 and Cys127/Cys136.

It belongs to the ALKAL family. Expressed at low level in the notochord and iridophore stripes, the eye and the swim bladder.

It is found in the secreted. Its subcellular location is the cell membrane. Its function is as follows. Cytokine that acts as a physiological ligand for receptor tyrosine kinases LTK and ALK. Required for iridophore development in the adult eye by acting as a receptor for LTK. This is ALK and LTK ligand 1 from Danio rerio (Zebrafish).